The chain runs to 525 residues: MSL complex subunit 3 (525 aa).

One can recognise a Tudor-knot domain in the interval 13-72 (SGEKVLCFEPDPTKARVLYDAKIIDVIIGKDEKGRKIPEYLIHFNGWNRSWDRWAAEEHV). Disordered stretches follow at residues 119 to 148 (KEKS…KEHR) and 302 to 383 (TTTT…DTSA). Residues 136 to 146 (SCGEKNGGIKE) show a composition bias toward basic and acidic residues. The region spanning 172 to 521 (DERTITIDIP…CEAHYSTKNP (350 aa)) is the MRG domain. The required for the histone acetyltransferase activity of the MSL complex stretch occupies residues 294–444 (FFLPIKESTT…WKLVPDNYPP (151 aa)). 2 positions are modified to phosphoserine: Ser-313 and Ser-315. A compositionally biased stretch (low complexity) spans 320 to 332 (NPSTPQSTESQPP). A phosphoserine mark is found at Ser-371 and Ser-404. Thr-409 carries the phosphothreonine modification. Residues Ser-411 and Ser-415 each carry the phosphoserine modification.

Component of the MSL histone acetyltransferase complex at least composed of the KAT8/MOF, MSL1/hampin, MSL2 and MSL3. Interacts (via the MRG domain) with MSL1 and KAT8/MOF. As to expression, in testis, expression is mostly restricted to the spermatocyte stage and only in a small portion of spermatogonia.

The protein resides in the nucleus. Its function is as follows. Non-catalytic component of the MSL histone acetyltransferase complex, a multiprotein complex that mediates the majority of histone H4 acetylation at 'Lys-16' (H4K16ac), an epigenetic mark that prevents chromatin compaction. The MSL complex is required for chromosome stability and genome integrity by maintaining homeostatic levels of H4K16ac. The MSL complex is also involved in gene dosage by promoting up-regulation of genes expressed by the X chromosome. X up-regulation is required to compensate for autosomal biallelic expression. The MSL complex also participates in gene dosage compensation by promoting expression of Tsix non-coding RNA. Acts as a histone reader that specifically recognizes and binds histone H4 monomethylated at 'Lys-20' (H4K20Me1) in a DNA-dependent manner and is proposed to be involved in chromosomal targeting of the MSL complex. May play a role X inactivation in females. In Mus musculus (Mouse), this protein is MSL complex subunit 3.